Reading from the N-terminus, the 24-residue chain is Brevinin-1PTa (24 aa).

Cysteines 18 and 24 form a disulfide.

As to expression, expressed by the skin glands.

It localises to the secreted. Its function is as follows. Has antibacterial activity against the Gram-positive bacterium S.aureus ATCC 25923 (MIC=3 uM) and the Gram-negative bacterium E.coli ATCC 25726 (MIC=24 uM). This chain is Brevinin-1PTa, found in Pulchrana picturata (Malaysian fire frog).